A 400-amino-acid polypeptide reads, in one-letter code: Laminin subunit B (400 aa).

Laminin EGF-like domains follow at residues 1–5, 6–53, and 54–100; these read EGCKP, CECD…GCKS, and CTCN…QCIP. 8 disulfide bridges follow: Cys6–Cys18, Cys8–Cys25, Cys27–Cys36, Cys39–Cys51, Cys54–Cys66, Cys56–Cys73, Cys75–Cys84, and Cys87–Cys98. The interval 101-400 is domain II and I; that stretch reads CGECFDNWDK…AEAKNNAHEA (300 aa). The stretch at 140-235 forms a coiled coil; that stretch reads KEFEELEQVL…RENALEIQEQ (96 aa). N-linked (GlcNAc...) asparagine glycans are attached at residues Asn160, Asn175, Asn216, Asn266, Asn283, Asn310, and Asn356. A coiled-coil region spans residues 353-400; the sequence is EAKNTSRKAEELIKSKYRSTSSTLSELENSNKQCKQATAEAKNNAHEA. Positions 369-400 are disordered; that stretch reads YRSTSSTLSELENSNKQCKQATAEAKNNAHEA. The span at 371-383 shows a compositional bias: low complexity; the sequence is STSSTLSELENSN.

Laminin is a complex glycoprotein, consisting of three different polypeptide chains (alpha, beta, gamma), which are bound to each other by disulfide bonds into a cross-shaped molecule comprising one long and three short arms with globules at each end. In terms of tissue distribution, individual glial and muscle cells.

It localises to the secreted. The protein localises to the extracellular space. It is found in the extracellular matrix. In terms of biological role, binding to cells via a high affinity receptor, laminin is thought to mediate the attachment, migration and organization of cells into tissues during embryonic development by interacting with other extracellular matrix components. This chain is Laminin subunit B, found in Hirudo medicinalis (Medicinal leech).